An 853-amino-acid chain; its full sequence is WEB family protein At5g16730, chloroplastic (853 aa).

Composition is skewed to low complexity over residues 1-27 (MASK…PATP) and 36-49 (KSET…STTT). The N-terminal 84 residues, 1-84 (MASKTKTSLS…PTPPEKSQAR (84 aa)), are a transit peptide targeting the chloroplast. 4 disordered regions span residues 1–106 (MASK…IKED), 386–465 (KEDL…SKKA), 666–765 (LAKK…SVEV), and 778–820 (KEAF…ALTA). A compositionally biased stretch (polar residues) spans 92-101 (ESPQTTTRLS). Residues 94 to 670 (PQTTTRLSQI…LEEAILAKKQ (577 aa)) are a coiled coil. Basic and acidic residues-rich tracts occupy residues 402-465 (EVSK…SKKA), 698-718 (NGHR…HEPP), and 732-753 (MEEK…KKDE). The segment covering 754–763 (SQDDDKDDSV) has biased composition (acidic residues). Residues 778–788 (KEAFPDKKSEL) show a composition bias toward basic and acidic residues. Ser790 carries the post-translational modification Phosphoserine. Basic and acidic residues predominate over residues 797-807 (SSKIDESDKTS).

Belongs to the WEB family.

The protein localises to the plastid. The protein resides in the chloroplast. This Arabidopsis thaliana (Mouse-ear cress) protein is WEB family protein At5g16730, chloroplastic.